A 329-amino-acid chain; its full sequence is MASQLTDAFARKFYYLRLSITDVCNFRCTYCLPDGYKPSGVTNKGFLTVDEIRRVTRAFASLGTEKVRLTGGEPSLRRDFTDIIAAVRENDAIRQIAVTTNGYRLERDVANWRDAGLTGINVSVDSLDARQFHAITGQDKFNQVMAGIDAAFEAGFEKVKVNTVLMRDVNHHQLDTFLNWIQHRPIQLRFIELMETGEGSELFRKHHISGQVLRDELLRRGWIHQLRQRSDGPAQVFCHPDYAGEIGLIMPYEKDFCTTCNRLRVSSIGKLHLCLFGEGGVNLRDLLEDDIQQQALEARISAALREKKQTHFLHQNNTGITQNLSYIGG.

The 227-residue stretch at 8–234 (AFARKFYYLR…QLRQRSDGPA (227 aa)) folds into the Radical SAM core domain. R17 contributes to the GTP binding site. Positions 24 and 28 each coordinate [4Fe-4S] cluster. S-adenosyl-L-methionine is bound at residue Y30. C31 contributes to the [4Fe-4S] cluster binding site. Residue R68 participates in GTP binding. S-adenosyl-L-methionine is bound at residue G72. Position 99 (T99) interacts with GTP. S-adenosyl-L-methionine is bound at residue S123. A GTP-binding site is contributed by K160. An S-adenosyl-L-methionine-binding site is contributed by M194. [4Fe-4S] cluster is bound by residues C257 and C260. Residue 262 to 264 (RLR) coordinates GTP. [4Fe-4S] cluster is bound at residue C274.

Belongs to the radical SAM superfamily. MoaA family. As to quaternary structure, monomer and homodimer. [4Fe-4S] cluster is required as a cofactor.

It catalyses the reaction GTP + AH2 + S-adenosyl-L-methionine = (8S)-3',8-cyclo-7,8-dihydroguanosine 5'-triphosphate + 5'-deoxyadenosine + L-methionine + A + H(+). Its pathway is cofactor biosynthesis; molybdopterin biosynthesis. Its function is as follows. Catalyzes the cyclization of GTP to (8S)-3',8-cyclo-7,8-dihydroguanosine 5'-triphosphate. The sequence is that of GTP 3',8-cyclase from Escherichia coli O127:H6 (strain E2348/69 / EPEC).